Here is a 498-residue protein sequence, read N- to C-terminus: Lysine--tRNA ligase (498 aa).

Mg(2+) contacts are provided by Glu401 and Glu408.

It belongs to the class-II aminoacyl-tRNA synthetase family. Homodimer. Mg(2+) serves as cofactor.

The protein resides in the cytoplasm. The enzyme catalyses tRNA(Lys) + L-lysine + ATP = L-lysyl-tRNA(Lys) + AMP + diphosphate. This Dehalococcoides mccartyi (strain ATCC BAA-2266 / KCTC 15142 / 195) (Dehalococcoides ethenogenes (strain 195)) protein is Lysine--tRNA ligase.